A 121-amino-acid chain; its full sequence is Putative iron-sulfur cluster insertion protein ErpA (121 aa).

Iron-sulfur cluster is bound by residues cysteine 49, cysteine 113, and cysteine 115.

Belongs to the HesB/IscA family. Homodimer. Iron-sulfur cluster is required as a cofactor.

Functionally, required for insertion of 4Fe-4S clusters. The sequence is that of Putative iron-sulfur cluster insertion protein ErpA from Paracidovorax citrulli (strain AAC00-1) (Acidovorax citrulli).